A 91-amino-acid polypeptide reads, in one-letter code: Sec-independent protein translocase protein TatA (91 aa).

A helical membrane pass occupies residues 1-21 (MGAMSPWHWAIVALVVIILFG). The tract at residues 44–91 (KEMQNDNSTPAPTAQQSAPAELPVADTTTAPVTPPAPVQPQHTEPKSA) is disordered. The segment covering 51–74 (STPAPTAQQSAPAELPVADTTTAP) has biased composition (low complexity).

Belongs to the TatA/E family. In terms of assembly, the Tat system comprises two distinct complexes: a TatABC complex, containing multiple copies of TatA, TatB and TatC subunits, and a separate TatA complex, containing only TatA subunits. Substrates initially bind to the TatABC complex, which probably triggers association of the separate TatA complex to form the active translocon.

Its subcellular location is the cell membrane. Its function is as follows. Part of the twin-arginine translocation (Tat) system that transports large folded proteins containing a characteristic twin-arginine motif in their signal peptide across membranes. TatA could form the protein-conducting channel of the Tat system. This chain is Sec-independent protein translocase protein TatA, found in Rhodococcus jostii (strain RHA1).